Here is a 2097-residue protein sequence, read N- to C-terminus: SCAR-like protein 1 (2097 aa).

Disordered regions lie at residues 205-227, 544-565, 1443-1467, 1588-1616, 1730-1802, 1820-1842, and 1893-1944; these read IANSESHTTSKDRSSRKVPPRTT, AHSSDKQSSQKSSGLDGSSIES, SQIASCSPTPSNEKIDELNAPPLSS, STEETYRLSSPVPPPNEPFSNVSYEDPQK, QERV…EKTV, ASSHVSENGCNQQSHGESLPVTS, and YEGP…EGGY. A compositionally biased stretch (low complexity) spans 549–562; it reads KQSSQKSSGLDGSS. A compositionally biased stretch (polar residues) spans 1443 to 1454; the sequence is SQIASCSPTPSN. The span at 1766 to 1794 shows a compositional bias: polar residues; that stretch reads SISQQGLQGSVFPSDTSDNGEHSSYTSRA. Residues 1908-1922 show a composition bias toward basic and acidic residues; sequence YPHDDHNSEKEDIHQ. The WH2 domain occupies 2028–2046; sequence ERNLLLEQIRNKTFNLKPV.

It belongs to the SCAR/WAVE family.

It localises to the cytoplasm. Its subcellular location is the cytoskeleton. Its function is as follows. Involved in regulation of actin and microtubule organization. Part of a WAVE complex that activates the Arp2/3 complex. In Oryza sativa subsp. japonica (Rice), this protein is SCAR-like protein 1.